A 162-amino-acid polypeptide reads, in one-letter code: Glycine cleavage system H protein, mitochondrial (162 aa).

The N-terminal 31 residues, 1 to 31 (MALRMWASSTANALRLSSATRPHFSPLSRCF), are a transit peptide targeting the mitochondrion. The 83-residue stretch at 53–135 (VATIGITDHA…YEDGWMIKVK (83 aa)) folds into the Lipoyl-binding domain. Lys94 is subject to N6-lipoyllysine.

It belongs to the GcvH family. The glycine cleavage system is composed of four proteins: P, T, L and H. (R)-lipoate is required as a cofactor.

It is found in the mitochondrion. The glycine cleavage system catalyzes the degradation of glycine. The H protein shuttles the methylamine group of glycine from the P protein to the T protein. The polypeptide is Glycine cleavage system H protein, mitochondrial (GDCSH) (Flaveria anomala (Yellowtops)).